The sequence spans 321 residues: Biotin synthase (321 aa).

Residues 45 to 271 (YYGKKVKLNM…INPTKEIRIA (227 aa)) enclose the Radical SAM core domain. The [4Fe-4S] cluster site is built by Cys63, Cys67, and Cys70. Positions 106, 139, 199, and 269 each coordinate [2Fe-2S] cluster.

It belongs to the radical SAM superfamily. Biotin synthase family. As to quaternary structure, homodimer. The cofactor is [4Fe-4S] cluster. It depends on [2Fe-2S] cluster as a cofactor.

It carries out the reaction (4R,5S)-dethiobiotin + (sulfur carrier)-SH + 2 reduced [2Fe-2S]-[ferredoxin] + 2 S-adenosyl-L-methionine = (sulfur carrier)-H + biotin + 2 5'-deoxyadenosine + 2 L-methionine + 2 oxidized [2Fe-2S]-[ferredoxin]. It participates in cofactor biosynthesis; biotin biosynthesis; biotin from 7,8-diaminononanoate: step 2/2. Functionally, catalyzes the conversion of dethiobiotin (DTB) to biotin by the insertion of a sulfur atom into dethiobiotin via a radical-based mechanism. The sequence is that of Biotin synthase from Staphylococcus epidermidis (strain ATCC 35984 / DSM 28319 / BCRC 17069 / CCUG 31568 / BM 3577 / RP62A).